Here is a 245-residue protein sequence, read N- to C-terminus: 1-(5-phosphoribosyl)-5-[(5-phosphoribosylamino)methylideneamino] imidazole-4-carboxamide isomerase (245 aa).

The Proton acceptor role is filled by aspartate 7. The active-site Proton donor is the aspartate 129.

It belongs to the HisA/HisF family.

Its subcellular location is the cytoplasm. It catalyses the reaction 1-(5-phospho-beta-D-ribosyl)-5-[(5-phospho-beta-D-ribosylamino)methylideneamino]imidazole-4-carboxamide = 5-[(5-phospho-1-deoxy-D-ribulos-1-ylimino)methylamino]-1-(5-phospho-beta-D-ribosyl)imidazole-4-carboxamide. It participates in amino-acid biosynthesis; L-histidine biosynthesis; L-histidine from 5-phospho-alpha-D-ribose 1-diphosphate: step 4/9. In Escherichia coli O9:H4 (strain HS), this protein is 1-(5-phosphoribosyl)-5-[(5-phosphoribosylamino)methylideneamino] imidazole-4-carboxamide isomerase.